Consider the following 275-residue polypeptide: Dermonecrotic toxin SpeSicTox-betaIIA3ii (275 aa).

The active site involves His-5. 2 residues coordinate Mg(2+): Glu-25 and Asp-27. His-41 serves as the catalytic Nucleophile. 2 disulfides stabilise this stretch: Cys-45-Cys-51 and Cys-47-Cys-190. Position 85 (Asp-85) interacts with Mg(2+).

This sequence belongs to the arthropod phospholipase D family. Class II subfamily. Mg(2+) is required as a cofactor. Expressed by the venom gland.

It localises to the secreted. The catalysed reaction is an N-(acyl)-sphingosylphosphocholine = an N-(acyl)-sphingosyl-1,3-cyclic phosphate + choline. It catalyses the reaction an N-(acyl)-sphingosylphosphoethanolamine = an N-(acyl)-sphingosyl-1,3-cyclic phosphate + ethanolamine. The enzyme catalyses a 1-acyl-sn-glycero-3-phosphocholine = a 1-acyl-sn-glycero-2,3-cyclic phosphate + choline. It carries out the reaction a 1-acyl-sn-glycero-3-phosphoethanolamine = a 1-acyl-sn-glycero-2,3-cyclic phosphate + ethanolamine. Its function is as follows. Dermonecrotic toxins cleave the phosphodiester linkage between the phosphate and headgroup of certain phospholipids (sphingolipid and lysolipid substrates), forming an alcohol (often choline) and a cyclic phosphate. This toxin acts on sphingomyelin (SM). It may also act on ceramide phosphoethanolamine (CPE), lysophosphatidylcholine (LPC) and lysophosphatidylethanolamine (LPE), but not on lysophosphatidylserine (LPS), and lysophosphatidylglycerol (LPG). It acts by transphosphatidylation, releasing exclusively cyclic phosphate products as second products. Induces dermonecrosis, hemolysis, increased vascular permeability, edema, inflammatory response, and platelet aggregation. This chain is Dermonecrotic toxin SpeSicTox-betaIIA3ii, found in Sicarius peruensis (Six-eyed sand spider).